The following is a 692-amino-acid chain: Elongation factor G (692 aa).

In terms of domain architecture, tr-type G spans 8 to 282; it reads EKTRNIGIMA…AIVDYLPAPT (275 aa). GTP-binding positions include 17 to 24, 81 to 85, and 135 to 138; these read AHIDAGKT, DTPGH, and NKMD.

Belongs to the TRAFAC class translation factor GTPase superfamily. Classic translation factor GTPase family. EF-G/EF-2 subfamily.

Its subcellular location is the cytoplasm. In terms of biological role, catalyzes the GTP-dependent ribosomal translocation step during translation elongation. During this step, the ribosome changes from the pre-translocational (PRE) to the post-translocational (POST) state as the newly formed A-site-bound peptidyl-tRNA and P-site-bound deacylated tRNA move to the P and E sites, respectively. Catalyzes the coordinated movement of the two tRNA molecules, the mRNA and conformational changes in the ribosome. In Pelotomaculum thermopropionicum (strain DSM 13744 / JCM 10971 / SI), this protein is Elongation factor G.